We begin with the raw amino-acid sequence, 130 residues long: Sulfurtransferase TusD (130 aa).

C80 functions as the Cysteine persulfide intermediate in the catalytic mechanism.

Belongs to the DsrE/TusD family. In terms of assembly, heterohexamer, formed by a dimer of trimers. The hexameric TusBCD complex contains 2 copies each of TusB, TusC and TusD. The TusBCD complex interacts with TusE.

It localises to the cytoplasm. In terms of biological role, part of a sulfur-relay system required for 2-thiolation of 5-methylaminomethyl-2-thiouridine (mnm(5)s(2)U) at tRNA wobble positions. Accepts sulfur from TusA and transfers it in turn to TusE. This Proteus mirabilis (strain HI4320) protein is Sulfurtransferase TusD.